We begin with the raw amino-acid sequence, 215 residues long: Pyrrolidone-carboxylate peptidase (215 aa).

Residues E80, C143, and H167 contribute to the active site.

It belongs to the peptidase C15 family. Homotetramer.

It is found in the cytoplasm. The catalysed reaction is Release of an N-terminal pyroglutamyl group from a polypeptide, the second amino acid generally not being Pro.. In terms of biological role, removes 5-oxoproline from various penultimate amino acid residues except L-proline. In Bacillus thuringiensis (strain Al Hakam), this protein is Pyrrolidone-carboxylate peptidase.